A 430-amino-acid polypeptide reads, in one-letter code: Adenylosuccinate synthetase (430 aa).

GTP contacts are provided by residues glycine 13–lysine 19 and glycine 41–threonine 43. Aspartate 14 (proton acceptor) is an active-site residue. 2 residues coordinate Mg(2+): aspartate 14 and glycine 41. Residues aspartate 14–lysine 17, asparagine 39–histidine 42, threonine 130, arginine 144, glutamine 225, threonine 240, and arginine 304 each bind IMP. Histidine 42 serves as the catalytic Proton donor. A substrate-binding site is contributed by serine 300–arginine 306. Residues arginine 306, lysine 332–aspartate 334, and serine 414–glycine 416 contribute to the GTP site.

Belongs to the adenylosuccinate synthetase family. In terms of assembly, homodimer. Mg(2+) is required as a cofactor.

Its subcellular location is the cytoplasm. It carries out the reaction IMP + L-aspartate + GTP = N(6)-(1,2-dicarboxyethyl)-AMP + GDP + phosphate + 2 H(+). It participates in purine metabolism; AMP biosynthesis via de novo pathway; AMP from IMP: step 1/2. In terms of biological role, plays an important role in the de novo pathway of purine nucleotide biosynthesis. Catalyzes the first committed step in the biosynthesis of AMP from IMP. This Buchnera aphidicola subsp. Schizaphis graminum (strain Sg) protein is Adenylosuccinate synthetase.